The primary structure comprises 528 residues: Serine/threonine-protein kinase akt-2 (528 aa).

The 104-residue stretch at 12-115 folds into the PH domain; that stretch reads DIVIESWLHK…WIEAIQAVSS (104 aa). The tract at residues 121–153 is disordered; it reads ENAGNTSMQEEDTNGNPSGESDVNMDATSTRSD. Positions 123-153 are enriched in polar residues; the sequence is AGNTSMQEEDTNGNPSGESDVNMDATSTRSD. A Protein kinase domain is found at 180–437; it reads FDFLKVLGQG…AREVSRAEFF (258 aa). ATP-binding positions include 186-194 and Lys-209; that span reads LGQGTFGKV. The active-site Proton acceptor is the Asp-303. Positions 438 to 515 constitute an AGC-kinase C-terminal domain; sequence KDVDWEATLR…YYVSGSLERS (78 aa).

Belongs to the protein kinase superfamily. AGC Ser/Thr protein kinase family. RAC subfamily. Interacts with pdk-1, sgk-1, akt-1 and daf-16. Part of a complex containing sgk-1, akt-1 and akt-2. Requires Mg(2+) as cofactor. As to expression, expressed in neurons, muscle cells of the pharynx, rectal gland cells, and spermatheca.

The enzyme catalyses L-seryl-[protein] + ATP = O-phospho-L-seryl-[protein] + ADP + H(+). It carries out the reaction L-threonyl-[protein] + ATP = O-phospho-L-threonyl-[protein] + ADP + H(+). With respect to regulation, phosphorylated and activated by pdk-1. Acts downstream of PI3 kinase age-1 and kinase pdk-1 in the daf-2/insulin receptor-like transduction pathway. Essential role in regulating developmental arrest at the dauer stage. Phosphorylates Forkhead-related daf-16 and the longevity-promoting skn-1 transcription factors, which inhibits their entry into the nucleus and antagonizes their functions. Role in immune function and pathogen resistance. Downstream of age-1 and together with akt-1 and sgk-1, promotes cell survival during embryonic development. Plays a role in maintaining the gonadal basement membrane through antagonizing akt-1 activity. The sequence is that of Serine/threonine-protein kinase akt-2 from Caenorhabditis elegans.